The primary structure comprises 4454 residues: E3 ubiquitin-protein ligase HUWE1 (4454 aa).

Residues 521 to 575 (RASSSNSSTSISGPGPGPGPGPGPGPGPGPGPGPGPGLGPSLGPGPGPGPRPGVQ) form a disordered region. Low complexity predominate over residues 523 to 533 (SSSNSSTSISG). Pro residues predominate over residues 535–571 (GPGPGPGPGPGPGPGPGPGPGPGLGPSLGPGPGPGPR). Ser-724 and Ser-725 each carry phosphoserine. 3 disordered regions span residues 781–834 (QKAD…VVGT), 1054–1077 (DEKA…AGSM), and 1094–1114 (TLAP…KSKI). Residues 801–811 (ASSEDEEEEEV) are compositionally biased toward acidic residues. The span at 813–832 (AMQSFNSAQQNETEPNQQVV) shows a compositional bias: polar residues. Ser-816 carries the phosphoserine modification. The residue at position 1160 (Ser-1160) is a Phosphoserine. Residues 1367–1378 (LSKEKEGSRGEE) are compositionally biased toward basic and acidic residues. Residues 1367–1396 (LSKEKEGSRGEEEAGQEEGGSRREPQVNQQ) form a disordered region. The UBA domain occupies 1392 to 1431 (QVNQQQLQQLMDMGFTREHAMEALLNTSTMEQATEYLLTH). A phosphoserine mark is found at Ser-1444, Ser-1446, Ser-1458, and Ser-1471. One can recognise a UIM domain in the interval 1446 to 1465 (SEEDQMMRAIAMSLGQDIPM). Positions 1472-1491 (PEEVACRKEEEERKAREKQE) are disordered. Residues 1679 to 1756 (RAQMTKYLQS…ETGNRRPVML (78 aa)) form the WWE domain. Positions 1766–1802 (KNSKSSNGQELEKTLEESKETDIKRKENKGNDIPLAL) are disordered. Positions 1775–1795 (ELEKTLEESKETDIKRKENKG) are enriched in basic and acidic residues. Ser-1983 is subject to Phosphoserine. 3 disordered regions span residues 2095–2142 (APAE…SKPL), 2339–2420 (SLFG…QEMQ), and 2433–2556 (LERD…ASPL). Residues 2097–2112 (AETSTTGTSQGEGAST) show a composition bias toward low complexity. A Phosphothreonine modification is found at Thr-2112. A compositionally biased stretch (basic and acidic residues) spans 2114 to 2134 (EETREGKKDKEGDRTSEEGKQ). The span at 2339 to 2368 (SLFGSKSASSKSKSEQDAQGASQDSSSHQQ) shows a compositional bias: low complexity. Residue Ser-2343 is modified to Phosphoserine. Position 2344 is an N6-acetyllysine (Lys-2344). 2 stretches are compositionally biased toward acidic residues: residues 2372–2383 (EPGEAEVQEEDH) and 2391–2402 (ADGDIMDGEAET). Residues Ser-2439, Ser-2442, and Ser-2468 each carry the phosphoserine modification. Residues 2465–2475 (SNLSQASTLQA) are compositionally biased toward polar residues. Positions 2485–2549 (DPEDEEEHTQ…SEMELDEDYP (65 aa)) are enriched in acidic residues. 3 positions are modified to phosphoserine: Ser-2604, Ser-2609, and Ser-2612. Phosphothreonine is present on Thr-2631. Ser-2661, Ser-2672, and Ser-2696 each carry phosphoserine. The segment covering 2781-2793 (IIDKGKEDKENRD) has biased composition (basic and acidic residues). Disordered stretches follow at residues 2781 to 3047 (IIDK…GVDP) and 3113 to 3136 (QQRA…MDPV). Residues 2794–2813 (QSAQCTVSKTNDSTEQNVSD) are compositionally biased toward polar residues. Residues 2815-2849 (TPMPDSYPTTPSSTDAPTSESKETLGTLQPSQQQP) show a composition bias toward low complexity. Thr-2828 bears the Phosphothreonine mark. 3 stretches are compositionally biased toward polar residues: residues 2895–2912 (AETT…TSLS), 2924–2941 (AVSS…SLAS), and 2954–2967 (AGSS…SSTP). Phosphoserine is present on residues Ser-2903, Ser-2910, Ser-2912, Ser-2938, Ser-2964, and Ser-2965. Position 2966 is a phosphothreonine (Thr-2966). A compositionally biased stretch (low complexity) spans 2990 to 3009 (PPEDSSPPASSESSSTRDSA). The residue at position 2995 (Ser-2995) is a Phosphoserine. A phosphoserine mark is found at Ser-3193, Ser-3194, Ser-3199, Ser-3204, and Ser-3212. An Omega-N-methylarginine modification is found at Arg-3226. Disordered stretches follow at residues 3320–3343 (PKLS…SHEN), 3431–3458 (QRTK…SQSS), 3482–3501 (GKNS…ETSL), 3548–3590 (SEVQ…TTPV), and 3615–3642 (TPTT…EGGS). Residues 3432–3446 (RTKETNCESDRERGS) are compositionally biased toward basic and acidic residues. Positions 3447–3458 (KQACSPCSSQSS) are enriched in low complexity. Composition is skewed to low complexity over residues 3552–3579 (TNSS…ATAP) and 3615–3628 (TPTT…TSTT). Ser-3633, Ser-3740, Ser-3830, Ser-3835, Ser-3837, and Ser-3838 each carry phosphoserine. The interval 3815-3836 (TRRANKKAKQTGRLGSSGLGSA) is disordered. The segment covering 3826-3836 (GRLGSSGLGSA) has biased composition (low complexity). 2 disordered regions span residues 3859-3927 (EGQR…LPLL) and 3974-4028 (RESK…SSSL). Residues 3871-3880 (TSESSNQSET) are compositionally biased toward polar residues. A phosphoserine mark is found at Ser-3887, Ser-3895, and Ser-3907. The segment covering 3894 to 3905 (PSPSAQDTQSIV) has biased composition (polar residues). The residue at position 3910 (Thr-3910) is a Phosphothreonine. 2 stretches are compositionally biased toward basic and acidic residues: residues 3913–3922 (GEKEKEERPP) and 3974–3995 (RESK…KDEP). Phosphoserine is present on residues Ser-3986 and Ser-3999. The span at 3996 to 4005 (PPLSPAPLTP) shows a compositional bias: pro residues. Thr-4004 and Thr-4007 each carry phosphothreonine. The segment covering 4018-4028 (EPSSMHISSSL) has biased composition (polar residues). The HECT domain maps to 4118 to 4454 (SPEEMKNRLY…QECSEGFGLA (337 aa)). The residue at position 4351 (Tyr-4351) is a Phosphotyrosine. The Glycyl thioester intermediate role is filled by Cys-4421.

Belongs to the UPL family. TOM1/PTR1 subfamily. Interacts with isoform p14ARF of CDKN2A which strongly inhibits HUWE1 ubiquitin ligase activity. Interacts with MYCN, POLB and CDC6. Interacts with isoform 2 of PA2G4. Interacts with NR1D1. Interacts with AMBRA1. Interacts with HAPSTR1. Interacts with HAPSTR2. In hepatocytes, interacts with PAQR3; the interaction promotes PPARA poylubiquitination and STUB1-mediated degradation. Phosphorylated on tyrosine, phosphorylation is probably required for its ability to inhibit TP53 transactivation. As to expression, widely expressed.

It is found in the cytoplasm. The protein localises to the nucleus. The protein resides in the mitochondrion. The catalysed reaction is S-ubiquitinyl-[E2 ubiquitin-conjugating enzyme]-L-cysteine + [acceptor protein]-L-lysine = [E2 ubiquitin-conjugating enzyme]-L-cysteine + N(6)-ubiquitinyl-[acceptor protein]-L-lysine.. It participates in protein modification; protein ubiquitination. In terms of biological role, E3 ubiquitin-protein ligase which mediates ubiquitination and subsequent proteasomal degradation of target proteins. Regulates apoptosis by catalyzing the polyubiquitination and degradation of MCL1. Mediates monoubiquitination of DNA polymerase beta (POLB) at 'Lys-41', 'Lys-61' and 'Lys-81', thereby playing a role in base-excision repair. Also ubiquitinates the p53/TP53 tumor suppressor and core histones including H1, H2A, H2B, H3 and H4. Ubiquitinates MFN2 to negatively regulate mitochondrial fusion in response to decreased stearoylation of TFRC. Ubiquitination of MFN2 also takes place following induction of mitophagy; AMBRA1 acts as a cofactor for HUWE1-mediated ubiquitination. Regulates neural differentiation and proliferation by catalyzing the polyubiquitination and degradation of MYCN. May regulate abundance of CDC6 after DNA damage by polyubiquitinating and targeting CDC6 to degradation. Mediates polyubiquitination of PA2G4. Acts in concert with MYCBP2 to regulate the circadian clock gene expression by promoting the lithium-induced ubiquination and degradation of NR1D1. Binds to an upstream initiator-like sequence in the preprodynorphin gene. Mediates HAPSTR1 degradation, but is also a required cofactor in the pathway by which HAPSTR1 governs stress signaling. Acts as a regulator of the JNK and NF-kappa-B signaling pathways by mediating assembly of heterotypic 'Lys-63'-/'Lys-48'-linked branched ubiquitin chains that are then recognized by TAB2: HUWE1 mediates branching of 'Lys-48'-linked chains of substrates initially modified with 'Lys-63'-linked conjugates by TRAF6. 'Lys-63'-/'Lys-48'-linked branched ubiquitin chains protect 'Lys-63'-linkages from CYLD deubiquitination. Ubiquitinates PPARA in hepatocytes. The protein is E3 ubiquitin-protein ligase HUWE1 (Huwe1) of Rattus norvegicus (Rat).